A 310-amino-acid chain; its full sequence is Protein BIG GRAIN 1 (310 aa).

The segment at 77-140 is disordered; it reads SYRARAPGPH…EKKAKKPGAS (64 aa). Positions 90–106 are enriched in low complexity; the sequence is SSSSECSSYGGFSSSEA.

Belongs to the BIG GRAIN 1 (BG1) plant protein family. Mostly expressed in the vascular tissues of leaves, culms and young panicles, especially in hulls.

It is found in the cell membrane. Its function is as follows. Involved in auxin transport. Positive regulator of the auxin signaling pathway involved in gravitropism, plant growth and grain development. The polypeptide is Protein BIG GRAIN 1 (Oryza sativa subsp. japonica (Rice)).